Here is a 103-residue protein sequence, read N- to C-terminus: MQLYTYLYLLVPLVTFHLILGTGTLDHGGALTERRSTDATALKPEPVLQKSAARSTDDNGKDRLTQMKRILKKRGNNPRADEEYLKFIEEQRKQGKLDPTKFP.

The first 21 residues, methionine 1–glycine 21, serve as a signal peptide directing secretion. The propeptide occupies threonine 22–arginine 79. Residues arginine 34–glutamate 83 form a disordered region. The segment covering serine 55–threonine 65 has biased composition (basic and acidic residues). 4-carboxyglutamate occurs at positions 82, 83, and 89.

The protein belongs to the conotoxin B superfamily. Requires Ca(2+) as cofactor. The cofactor is Mg(2+). Expressed by the venom duct.

Its subcellular location is the secreted. Conantokins inhibit N-methyl-D-aspartate (NMDA) receptors. This toxin has the highest potency for the NR2B/GRIN2B subunit (IC(50)=0.11 uM), followed by NR2D/GRIN2D (IC(50)=0.48 uM), NR2A/GRIN2A (IC(50)=2.1 uM), and NR2C/GRIN2C (IC(50)=6.1 uM) subunits when tested on rat receptors. In Conus rolani (Cone snail), this protein is Conantokin R1-A.